The primary structure comprises 450 residues: Cyclin-A2-3 (450 aa).

2 disordered regions span residues 18 to 53 (ALRA…NKRK) and 75 to 94 (NSKQ…SQLA). Positions 23 to 34 (EVTSTTQNQQRV) are enriched in polar residues.

This sequence belongs to the cyclin family. Cyclin AB subfamily. Interacts with CDKA-1. Interacts with SAMBA.

It localises to the nucleus. Functionally, negatively regulates endocycles and acts as a regulator of ploidy levels in endoreduplication. Promotes divisions in the guard cells (GCs) after the guard mother cells (GMC) symmetric division. In Arabidopsis thaliana (Mouse-ear cress), this protein is Cyclin-A2-3 (CYCA2-3).